Reading from the N-terminus, the 349-residue chain is Probable dual-specificity RNA methyltransferase RlmN (349 aa).

Residue Glu94 is the Proton acceptor of the active site. The region spanning 100–324 is the Radical SAM core domain; it reads YKTHTSICLS…NKNNVNTTIR (225 aa). The cysteines at positions 107 and 335 are disulfide-linked. Cys114, Cys118, and Cys121 together coordinate [4Fe-4S] cluster. Residues 161–162, Ser193, 216–218, and Asn292 contribute to the S-adenosyl-L-methionine site; these read GE and SLH. Residue Cys335 is the S-methylcysteine intermediate of the active site.

Belongs to the radical SAM superfamily. RlmN family. [4Fe-4S] cluster serves as cofactor.

It localises to the cytoplasm. It carries out the reaction adenosine(2503) in 23S rRNA + 2 reduced [2Fe-2S]-[ferredoxin] + 2 S-adenosyl-L-methionine = 2-methyladenosine(2503) in 23S rRNA + 5'-deoxyadenosine + L-methionine + 2 oxidized [2Fe-2S]-[ferredoxin] + S-adenosyl-L-homocysteine. The catalysed reaction is adenosine(37) in tRNA + 2 reduced [2Fe-2S]-[ferredoxin] + 2 S-adenosyl-L-methionine = 2-methyladenosine(37) in tRNA + 5'-deoxyadenosine + L-methionine + 2 oxidized [2Fe-2S]-[ferredoxin] + S-adenosyl-L-homocysteine. In terms of biological role, specifically methylates position 2 of adenine 2503 in 23S rRNA and position 2 of adenine 37 in tRNAs. This chain is Probable dual-specificity RNA methyltransferase RlmN, found in Finegoldia magna (strain ATCC 29328 / DSM 20472 / WAL 2508) (Peptostreptococcus magnus).